Here is a 309-residue protein sequence, read N- to C-terminus: Intron-encoded DNA endonuclease ai2a (309 aa).

The protein belongs to the LAGLIDADG endonuclease family.

Its subcellular location is the mitochondrion. Functionally, mitochondrial DNA endonuclease involved in intron homing. Cleaves only one strand of intronless DNA sequence at the site which coincides with the I-SceII cleavage recognition site. This Dictyostelium discoideum (Social amoeba) protein is Intron-encoded DNA endonuclease ai2a (ai2a).